Consider the following 376-residue polypeptide: Carbamoyl phosphate synthase small chain (376 aa).

The interval 1 to 181 is nucleophile; sequence MSKAVLVLED…VEPDGPPGVS (181 aa). A CPSase region spans residues 1 to 183; that stretch reads MSKAVLVLED…PDGPPGVSRF (183 aa). Residues Ser46, Gly232, Gly234, Phe261, Gln264, Asn302, Gly304, and Phe305 each coordinate L-glutamine. A Glutamine amidotransferase type-1 domain is found at 184-376; sequence TVAALDLGIK…FVELMAGEGR (193 aa). Catalysis depends on residues His350 and Glu352.

The protein belongs to the CarA family. Composed of two chains; the small (or glutamine) chain promotes the hydrolysis of glutamine to ammonia, which is used by the large (or ammonia) chain to synthesize carbamoyl phosphate. Tetramer of heterodimers (alpha,beta)4.

It carries out the reaction hydrogencarbonate + L-glutamine + 2 ATP + H2O = carbamoyl phosphate + L-glutamate + 2 ADP + phosphate + 2 H(+). The catalysed reaction is L-glutamine + H2O = L-glutamate + NH4(+). The protein operates within amino-acid biosynthesis; L-arginine biosynthesis; carbamoyl phosphate from bicarbonate: step 1/1. It participates in pyrimidine metabolism; UMP biosynthesis via de novo pathway; (S)-dihydroorotate from bicarbonate: step 1/3. Functionally, small subunit of the glutamine-dependent carbamoyl phosphate synthetase (CPSase). CPSase catalyzes the formation of carbamoyl phosphate from the ammonia moiety of glutamine, carbonate, and phosphate donated by ATP, constituting the first step of 2 biosynthetic pathways, one leading to arginine and/or urea and the other to pyrimidine nucleotides. The small subunit (glutamine amidotransferase) binds and cleaves glutamine to supply the large subunit with the substrate ammonia. The polypeptide is Carbamoyl phosphate synthase small chain (Mycobacterium tuberculosis (strain CDC 1551 / Oshkosh)).